The primary structure comprises 122 residues: MPITKDEIIKALEEMKLNELNELVKAIEDHFGVVASVGVAAAAPAEATNAAPTEVSVVMTSVGQQKVAVIKVVKELTGVGLMDAKKIVDGTMPVTIKEHVKPEEAEEMKAKLVEAGASIDLK.

This sequence belongs to the bacterial ribosomal protein bL12 family. In terms of assembly, homodimer. Part of the ribosomal stalk of the 50S ribosomal subunit. Forms a multimeric L10(L12)X complex, where L10 forms an elongated spine to which 2 to 4 L12 dimers bind in a sequential fashion. Binds GTP-bound translation factors.

Its function is as follows. Forms part of the ribosomal stalk which helps the ribosome interact with GTP-bound translation factors. Is thus essential for accurate translation. The protein is Large ribosomal subunit protein bL12 of Mycoplasma mycoides subsp. mycoides SC (strain CCUG 32753 / NCTC 10114 / PG1).